The sequence spans 1857 residues: MKMSEGIISPLSLSSESSEQQQAAIRKFSNGSNGSGGGGGSNLSVNSSNSGSNNSIRKSSTLMYNGPLPSINDGKELLLENSKPKVVELVNTFNHKPLSTIHSVHNEIPPPAIEKEKKEIINTISNSGVTKYMTALEILDSTINTPLNRSRSGSIGSKPICNNLTSSSSSSSTTATTPSPTTTSNNNNNNNNNNNNNNNNNNNNNNNNNNNNNNNNNNNNNNNNNNTTSTTTTTTSILISSSPPPSSSSSSSSNDEQFNNNNNNNNSNSGGSSRMITSKSQIKPLIVTSNTAATTTTTTTTNTSAPTTPTNRVQSSLDDLLFNLPTIPSNVPTVNGGPKISAVPKKVSSSKLLIPPSSNVSSSSNITLSLSSSSPSSSSSSSTSTVVPIVQLSSSNSTNSPSTSLPTTPRLSQPTTSYTQLIPSQQQQQPTESNSSSNTNTTTTSSSSSSSSSSLTISSPQPSNNSIRISAFGRSSTQFTISSNGIPSSPGQVSNKDYNNIGNLSNSSGERVKNKQYSMLNISKKTILDESDISSSPRSIGSPNSIRASISSQLPPSLSSIGGGGGGGSGPNVVSNKPLVVKKPSTSEHIKKENIWRQTMIPLTKEDHIKVVFEGIPGKRVIQKFLIDKTPIEIKSKFFEDLKDGDLLNGLTQLPSLIPEHYELKVLSVNSTISNETLPLRRQTLMQACNISRLFPKLHLILKSESTTILDGASTTTTTTTTTTTTTANQSSNIITKSNSSLDLTINNSNEIIDVKGHIQAELEIFELIGTSFTRVLDQGQEVVSFRRDFAQFRLSNFTSTRNDLSQMIYVSSEPLPLTIPNKITIMVLLPGDGKIIKRVDCCPNSSVGDVKKEIFKKFAMIDRVHTQGKTQDDFVLKVTGFREYILCIHELGNLTSRQRFYPTGSGGDFSLMDYDYIRQCVGKNQTVELSLTNNSILSLNQVSEKVSFIDKILETSDFDDYDEDLDSINSNSFDDLKQSIQQQQQQQIQTVINIKETNKENKDSNKENKDSSSNNNNNNNNNNNNNNNNNNNNNNNNNNNGNNNGNNSNNNSNSNISRGSIDSEGNGSGSGNGSEQPTLIGVQNFSLPNNSKLPINIVKRLFRVNIAGLRNLNFNNNEDARNKFADGKNNQPNVFVMAELYYGGELLTNPVFTPIAQLASYGDGSVEFPNWEKGIAFTIPIRYLPRAARASFTVYVTTISEALESQMDEVVSKSIPIGWSNCLLMNHKGMLRMGPTAFRLWDDGRRANPIGTCVDNQAAKQPIILLVEFESFIRPIVYVDTALQSMMVNDSSSISSNGVESPSIVSFSSSAASSSPLPSSPLPSPVGLKKLDLDEARRLKALMDSDPLVQLSAEDKKLVYGYRHIYKSKPKALAKFLLSVNWIDPDQVTDAYRQMNDWALLKPVQALEILDAKFADEHVRNFAIKIINSFSDAEFSDFLLQLTQVLKYEPYHNSDLTHILIQRALSNRSRIGHFFFWFLKSEMHTPEIEERYGLLLEGYLRSCGTHRQDLIKQNQVLKSLHTVAMAVKQTNGSSERKKVLMEGLSKIKFPDTFQLPLDPRWEAKGLIIDKCRYMDSKKLPLWLVFENVEPHAKPLTVIFKVGDDLRQDILTLQVLRIMDKFWKNSGMDLRLQPYKCIATGDGIGMLEVVLNANTIANINKDAGGTGALLEEKTLVNWLKECNKTEAEYNKAVETFILSCAGYVVATYVMGIGDRHSDNIMITKLGHLFHIDFGHFLGNYKKKYGFKRERAPFIFTPQYMAIVGGKDSENFKRFVTTCCSAYNILRKNTDLFINLFQLMLSTGIPELQVAEDIDYLRKALAPGLSDEEAAEEFTKNISVALNTKTVLLNDIFHGWAH.

Composition is skewed to low complexity over residues 1–32 (MKMSEGIISPLSLSSESSEQQQAAIRKFSNGS) and 42–55 (NLSVNSSNSGSNNS). Disordered stretches follow at residues 1–61 (MKMS…KSST), 145–313 (TPLN…TNRV), 348–468 (SSSK…NSIR), 481–512 (ISSNGIPSSPGQVSNKDYNNIGNLSNSSGERV), and 530–573 (ESDI…GPNV). Residues 145–155 (TPLNRSRSGSI) show a composition bias toward polar residues. The span at 162-269 (NNLTSSSSSS…NNNNNNNSNS (108 aa)) shows a compositional bias: low complexity. Residues 270 to 281 (GGSSRMITSKSQ) are compositionally biased toward polar residues. 2 stretches are compositionally biased toward low complexity: residues 288–311 (TSNTAATTTTTTTTNTSAPTTPTN) and 352–464 (LLIP…QPSN). Residues 533–560 (ISSSPRSIGSPNSIRASISSQLPPSLSS) are compositionally biased toward low complexity. The span at 561–570 (IGGGGGGGSG) shows a compositional bias: gly residues. In terms of domain architecture, PI3K-RBD spans 821–934 (PNKITIMVLL…NQTVELSLTN (114 aa)). A disordered region spans residues 996-1078 (KETNKENKDS…SGSGNGSEQP (83 aa)). Positions 997–1011 (ETNKENKDSNKENKD) are enriched in basic and acidic residues. Low complexity predominate over residues 1012 to 1056 (SSSNNNNNNNNNNNNNNNNNNNNNNNNNNNGNNNGNNSNNNSNSN). A C2 PI3K-type domain is found at 1099-1271 (VKRLFRVNIA…QPIILLVEFE (173 aa)). In terms of domain architecture, PIK helical spans 1326–1503 (PVGLKKLDLD…GLLLEGYLRS (178 aa)). The 278-residue stretch at 1568-1845 (IIDKCRYMDS…NISVALNTKT (278 aa)) folds into the PI3K/PI4K catalytic domain. Residues 1574-1580 (YMDSKKL) are G-loop. The segment at 1711–1719 (GIGDRHSDN) is catalytic loop. Residues 1730–1756 (HIDFGHFLGNYKKKYGFKRERAPFIFT) are activation loop.

This sequence belongs to the PI3/PI4-kinase family.

It catalyses the reaction a 1,2-diacyl-sn-glycero-3-phospho-(1D-myo-inositol) + ATP = a 1,2-diacyl-sn-glycero-3-phospho-(1D-myo-inositol-3-phosphate) + ADP + H(+). The sequence is that of Phosphatidylinositol 3-kinase 2 (pikB) from Dictyostelium discoideum (Social amoeba).